The chain runs to 546 residues: Chaperonin GroEL (546 aa).

ATP-binding positions include 30–33, 87–91, G414, 477–479, and D493; these read TLGP, DGTTT, and NAL.

Belongs to the chaperonin (HSP60) family. As to quaternary structure, forms a cylinder of 14 subunits composed of two heptameric rings stacked back-to-back. Interacts with the co-chaperonin GroES.

It localises to the cytoplasm. The enzyme catalyses ATP + H2O + a folded polypeptide = ADP + phosphate + an unfolded polypeptide.. Functionally, together with its co-chaperonin GroES, plays an essential role in assisting protein folding. The GroEL-GroES system forms a nano-cage that allows encapsulation of the non-native substrate proteins and provides a physical environment optimized to promote and accelerate protein folding. This is Chaperonin GroEL from Syntrophomonas wolfei subsp. wolfei (strain DSM 2245B / Goettingen).